A 150-amino-acid polypeptide reads, in one-letter code: Large ribosomal subunit protein bL9 (150 aa).

The protein belongs to the bacterial ribosomal protein bL9 family.

Its function is as follows. Binds to the 23S rRNA. The sequence is that of Large ribosomal subunit protein bL9 from Shewanella putrefaciens (strain CN-32 / ATCC BAA-453).